Reading from the N-terminus, the 461-residue chain is Serine--tRNA ligase (461 aa).

Residues 112-134 (EVPFGRDENDNREHHTFGEKPRF) are disordered. Basic and acidic residues predominate over residues 114 to 134 (PFGRDENDNREHHTFGEKPRF). Position 252-254 (252-254 (TAE)) interacts with L-serine. Residue 283–285 (RAE) participates in ATP binding. Position 306 (Glu-306) interacts with L-serine. 370–373 (EISS) lines the ATP pocket. Ser-406 contributes to the L-serine binding site.

The protein belongs to the class-II aminoacyl-tRNA synthetase family. Type-1 seryl-tRNA synthetase subfamily. In terms of assembly, homodimer. The tRNA molecule binds across the dimer.

The protein localises to the cytoplasm. It carries out the reaction tRNA(Ser) + L-serine + ATP = L-seryl-tRNA(Ser) + AMP + diphosphate + H(+). It catalyses the reaction tRNA(Sec) + L-serine + ATP = L-seryl-tRNA(Sec) + AMP + diphosphate + H(+). It participates in aminoacyl-tRNA biosynthesis; selenocysteinyl-tRNA(Sec) biosynthesis; L-seryl-tRNA(Sec) from L-serine and tRNA(Sec): step 1/1. In terms of biological role, catalyzes the attachment of serine to tRNA(Ser). Is also able to aminoacylate tRNA(Sec) with serine, to form the misacylated tRNA L-seryl-tRNA(Sec), which will be further converted into selenocysteinyl-tRNA(Sec). In Methylocella silvestris (strain DSM 15510 / CIP 108128 / LMG 27833 / NCIMB 13906 / BL2), this protein is Serine--tRNA ligase.